A 437-amino-acid chain; its full sequence is MFTAFARAFKTPDLRKKLLFTLGIIVIYRLGAHIPAPGVDYSKVQQCIDQADSGGLLGLMQMFSGGALLQITIFALGIMPYITASIILQLLTVVIPRLEALKKEGQSGTAKITQYTRYLTVALAILQGTGLVATARSGALFQNCSVGSQIVADKSIFTTIIMVLTMTAGTPPVMWLGELITDRGIGNGMSIPMFISIAATFPGALWAIKESGKLADGWIEFGTVILIGFVMVALVVFVEQAQRRIPVQLPKRMIGRRSYGGTSTYIPLKVNQAGVIPVIFASSLLYIPALIVQFSNSQAGWATWIQDNFVTGDHPYYIATYFVLIVFFAFFYVAISFNPDEVADNMKKYGGFIPGIRAGRPTAEYLSYVLNRITWPGSLYLGLIALVPTMALAGFGGANQNFPFGGTSILIIVGVGLETVKQIESQLQQRNYEGFLR.

The next 10 membrane-spanning stretches (helical) occupy residues Leu-19–Val-39, Leu-68–Leu-88, Val-121–Phe-141, Ile-156–Leu-176, Gly-188–Ile-208, Trp-218–Val-238, Gly-274–Phe-294, Tyr-317–Phe-337, Ser-378–Ala-398, and Gln-400–Val-420.

This sequence belongs to the SecY/SEC61-alpha family. In terms of assembly, component of the Sec protein translocase complex. Heterotrimer consisting of SecY, SecE and SecG subunits. The heterotrimers can form oligomers, although 1 heterotrimer is thought to be able to translocate proteins. Interacts with the ribosome. Interacts with SecDF, and other proteins may be involved. Interacts with SecA.

It is found in the cell membrane. Functionally, the central subunit of the protein translocation channel SecYEG. Consists of two halves formed by TMs 1-5 and 6-10. These two domains form a lateral gate at the front which open onto the bilayer between TMs 2 and 7, and are clamped together by SecE at the back. The channel is closed by both a pore ring composed of hydrophobic SecY resides and a short helix (helix 2A) on the extracellular side of the membrane which forms a plug. The plug probably moves laterally to allow the channel to open. The ring and the pore may move independently. The chain is Protein translocase subunit SecY from Streptomyces griseus.